Reading from the N-terminus, the 417-residue chain is Serine hydroxymethyltransferase 3 (417 aa).

(6S)-5,6,7,8-tetrahydrofolate-binding positions include L121 and 125-127 (GHL). Residue K230 is modified to N6-(pyridoxal phosphate)lysine. Residue 355 to 357 (SPF) participates in (6S)-5,6,7,8-tetrahydrofolate binding.

Belongs to the SHMT family. In terms of assembly, homodimer. Requires pyridoxal 5'-phosphate as cofactor.

Its subcellular location is the cytoplasm. It catalyses the reaction (6R)-5,10-methylene-5,6,7,8-tetrahydrofolate + glycine + H2O = (6S)-5,6,7,8-tetrahydrofolate + L-serine. It participates in one-carbon metabolism; tetrahydrofolate interconversion. Its pathway is amino-acid biosynthesis; glycine biosynthesis; glycine from L-serine: step 1/1. Its function is as follows. Catalyzes the reversible interconversion of serine and glycine with tetrahydrofolate (THF) serving as the one-carbon carrier. This reaction serves as the major source of one-carbon groups required for the biosynthesis of purines, thymidylate, methionine, and other important biomolecules. Also exhibits THF-independent aldolase activity toward beta-hydroxyamino acids, producing glycine and aldehydes, via a retro-aldol mechanism. The chain is Serine hydroxymethyltransferase 3 from Pseudomonas fluorescens (strain Pf0-1).